Reading from the N-terminus, the 146-residue chain is Ecotin-like protein 1 (146 aa).

This sequence belongs to the protease inhibitor I11 (ecotin) family.

The protein is Ecotin-like protein 1 (ISP1) of Leishmania infantum.